We begin with the raw amino-acid sequence, 507 residues long: Maturase K (507 aa).

The protein belongs to the intron maturase 2 family. MatK subfamily.

It is found in the plastid. Its subcellular location is the chloroplast. Its function is as follows. Usually encoded in the trnK tRNA gene intron. Probably assists in splicing its own and other chloroplast group II introns. The protein is Maturase K of Fagopyrum esculentum (Common buckwheat).